The sequence spans 318 residues: MSNEYFDPKLKIFSLNSNRELAEEIAKEVGIELGKSSVTHFSDGEIQINIEESIRGCHVYVIQSTSNPVNQNLMELLIMIDALKRASAATINIVMPYYGYARQDRKARSREPITAKLVANLIETAGATRMITLDMHAPQIQGFFDIPIDHLNAVRLLSDYFSERHLGDDLVVVSPDHGGVTRARKMADRLKAPIAIIDKRRPRPNVAEVMNIVGNVEGKVCIIIDDIIDTAGTITLAAKALREAGATKVYACCSHPVLSGPAMKRIEDSPIEKLVVTNSIALPEEKWIDKMEQLSVAALLGEAIVRVHENASVSSLFE.

Residues 43-45 (DGE) and 102-103 (RQ) contribute to the ATP site. Residues H136 and D176 each contribute to the Mg(2+) site. K199 is a catalytic residue. D-ribose 5-phosphate is bound by residues R201, D225, and 229-233 (DTAGT).

The protein belongs to the ribose-phosphate pyrophosphokinase family. Class I subfamily. Homohexamer. The cofactor is Mg(2+).

It localises to the cytoplasm. The enzyme catalyses D-ribose 5-phosphate + ATP = 5-phospho-alpha-D-ribose 1-diphosphate + AMP + H(+). The protein operates within metabolic intermediate biosynthesis; 5-phospho-alpha-D-ribose 1-diphosphate biosynthesis; 5-phospho-alpha-D-ribose 1-diphosphate from D-ribose 5-phosphate (route I): step 1/1. Involved in the biosynthesis of the central metabolite phospho-alpha-D-ribosyl-1-pyrophosphate (PRPP) via the transfer of pyrophosphoryl group from ATP to 1-hydroxyl of ribose-5-phosphate (Rib-5-P). In Listeria innocua serovar 6a (strain ATCC BAA-680 / CLIP 11262), this protein is Ribose-phosphate pyrophosphokinase 1.